The primary structure comprises 318 residues: NADH-ubiquinone oxidoreductase chain 1 (318 aa).

Transmembrane regions (helical) follow at residues 2 to 22 (FMIN…FLTL), 70 to 90 (MFIL…IPLP), 100 to 120 (LGVL…LWSG), 147 to 167 (AIIL…TLII), 172 to 192 (MWLI…TLAE), 222 to 242 (LFFM…AILF), 253 to 273 (ELYT…FLWI), and 294 to 314 (LPLT…TSGI).

Belongs to the complex I subunit 1 family. Core subunit of respiratory chain NADH dehydrogenase (Complex I) which is composed of 45 different subunits.

The protein resides in the mitochondrion inner membrane. It catalyses the reaction a ubiquinone + NADH + 5 H(+)(in) = a ubiquinol + NAD(+) + 4 H(+)(out). Its function is as follows. Core subunit of the mitochondrial membrane respiratory chain NADH dehydrogenase (Complex I) which catalyzes electron transfer from NADH through the respiratory chain, using ubiquinone as an electron acceptor. Essential for the catalytic activity and assembly of complex I. In Bos indicus (Zebu), this protein is NADH-ubiquinone oxidoreductase chain 1 (MT-ND1).